The sequence spans 115 residues: Immunoglobulin kappa variable 5-48 (115 aa).

Positions 1–20 (MVSTPQFLVFLLFWIPASRG) are cleaved as a signal peptide. Residues 21–43 (DILLTQSPAILSVSPGERVSFSC) form a framework-1 region. A disulfide bond links C43 and C108. The segment at 44-54 (RASQSIGTSIH) is complementarity-determining-1. Residues 55-69 (WYQQRTNGSPRLLIK) are framework-2. The interval 70 to 76 (YASESIS) is complementarity-determining-2. The framework-3 stretch occupies residues 77 to 108 (GIPSRFSGSGSGTDFTLSINSVESEDIADYYC). A complementarity-determining-3 region spans residues 109–115 (QQSNSWP).

The protein is Immunoglobulin kappa variable 5-48 of Mus musculus (Mouse).